A 445-amino-acid polypeptide reads, in one-letter code: tRNA-2-methylthio-N(6)-dimethylallyladenosine synthase (445 aa).

Residues 2-119 (KKLYIRTFGC…LPQLIAERRH (118 aa)) form the MTTase N-terminal domain. The [4Fe-4S] cluster site is built by Cys-11, Cys-48, Cys-82, Cys-156, Cys-160, and Cys-163. Residues 142-378 (RVEGASAFVS…RIDQQAQAIS (237 aa)) enclose the Radical SAM core domain. A TRAM domain is found at 379–442 (QAMVGRVERA…PHSLRGEIVT (64 aa)).

It belongs to the methylthiotransferase family. MiaB subfamily. As to quaternary structure, monomer. The cofactor is [4Fe-4S] cluster.

Its subcellular location is the cytoplasm. The enzyme catalyses N(6)-dimethylallyladenosine(37) in tRNA + (sulfur carrier)-SH + AH2 + 2 S-adenosyl-L-methionine = 2-methylsulfanyl-N(6)-dimethylallyladenosine(37) in tRNA + (sulfur carrier)-H + 5'-deoxyadenosine + L-methionine + A + S-adenosyl-L-homocysteine + 2 H(+). Its function is as follows. Catalyzes the methylthiolation of N6-(dimethylallyl)adenosine (i(6)A), leading to the formation of 2-methylthio-N6-(dimethylallyl)adenosine (ms(2)i(6)A) at position 37 in tRNAs that read codons beginning with uridine. This chain is tRNA-2-methylthio-N(6)-dimethylallyladenosine synthase, found in Aromatoleum aromaticum (strain DSM 19018 / LMG 30748 / EbN1) (Azoarcus sp. (strain EbN1)).